The sequence spans 758 residues: Transcription activator MSS11 (758 aa).

A disordered region spans residues 1–23 (MDNTTNINTNERSSNTDFSSAPN). The LisH domain maps to 51–83 (SKQLLYAHIYNYLIKNNYWNSAAKFLSEADLPL). Disordered stretches follow at residues 191 to 220 (TQNS…TNRN), 268 to 299 (LQSP…QQQQ), 322 to 355 (QQHQ…GLMP), 428 to 454 (GNQN…NANG), and 587 to 681 (KTNT…TKES). Positions 207 to 220 (DGSNFNLNDPTNRN) are enriched in polar residues. A compositionally biased stretch (low complexity) spans 269-299 (QSPAQPQQSSQQQIQQPQHQPQHQPQQQQQQ). 3 stretches are compositionally biased toward polar residues: residues 345–355 (SENSHSTGLMP), 436–454 (TRNN…NANG), and 587–600 (KTNT…STSV). The segment covering 605 to 664 (NNNNNNNNNNNNNNNNNSNNSNNNNNNNNNNNNSNNTPTVSQPSSKCTSSSSTTPNITTT) has biased composition (low complexity). Residues 667-676 (PKRKQRVGKT) are compositionally biased toward basic residues.

It belongs to the MSS11 family. In terms of assembly, interacts with FLO8, STE12 and TEC1.

It localises to the cytoplasm. The protein resides in the nucleus. In terms of biological role, transcription factor that regulates pseudohyphal differentiation, invasive growth, floculation, adhesion and starch metabolism in response to nutrient availability. The chain is Transcription activator MSS11 (MSS11) from Saccharomyces cerevisiae (strain ATCC 204508 / S288c) (Baker's yeast).